The following is a 353-amino-acid chain: MKKTLAALIVGAFAASAANAAVVYNNEGTKVELGGRVSIIAEQSTSNRKDQKHQHGSLRNQGSRFNIKVTHNLGDGYYALGYYETRFINKDIDGNEKNIGSGFGSITTKLAYAGLGNKELGEATFGLQKTIADKISTAEDKEYGVIEKNSYIPTEGNAIAYTYKGIEGLTLGASYVFGGRNFSDYEITDGKVSNAVQVGAKYDANNIVAGFAYGRTNYKAQQAKTQQVNGALATLGYHFDDLGLLISLDSGYAKTKNKADKHEKRYFVSPGFQYELMEDTNLYGNLKYERINSVDQGEKVREHAVLFGIDHKLHKQVLTYIEGAYARTRTNDKGKTEKTEKEKSVGVGLRVYF.

The N-terminal stretch at 1–20 (MKKTLAALIVGAFAASAANA) is a signal peptide.

The protein belongs to the Gram-negative porin family. Homotrimer.

It is found in the cell outer membrane. Forms pores that allow passive diffusion of small molecules across the outer membrane. In Haemophilus influenzae, this protein is Outer membrane protein P2 (ompP2).